The sequence spans 147 residues: Large ribosomal subunit protein uL13 (147 aa).

This sequence belongs to the universal ribosomal protein uL13 family. Part of the 50S ribosomal subunit.

Functionally, this protein is one of the early assembly proteins of the 50S ribosomal subunit, although it is not seen to bind rRNA by itself. It is important during the early stages of 50S assembly. This Beutenbergia cavernae (strain ATCC BAA-8 / DSM 12333 / CCUG 43141 / JCM 11478 / NBRC 16432 / NCIMB 13614 / HKI 0122) protein is Large ribosomal subunit protein uL13.